A 505-amino-acid chain; its full sequence is Trans-cinnamate 4-monooxygenase (505 aa).

A helical transmembrane segment spans residues 3-23; the sequence is LLLLEKSLIAVFVAVILATVI. (E)-cinnamate is bound by residues 213–218 and alanine 306; that span reads RSRLAQ. Cysteine 447 lines the heme pocket.

This sequence belongs to the cytochrome P450 family. The cofactor is heme. As to expression, expressed in roots, leaves, stems, flowers and siliques.

Its subcellular location is the membrane. The enzyme catalyses (E)-cinnamate + reduced [NADPH--hemoprotein reductase] + O2 = (E)-4-coumarate + oxidized [NADPH--hemoprotein reductase] + H2O + H(+). It participates in phenylpropanoid metabolism; trans-4-coumarate biosynthesis; trans-4-coumarate from trans-cinnamate: step 1/1. Functionally, catalyzes the first oxidative step of the phenylpropanoid pathway in higher plants by transforming trans-cinnamate into p-coumarate. The compounds formed by this pathway are essential components for lignification, pollination, and defense against ultraviolet light, predators and pathogens. In Arabidopsis thaliana (Mouse-ear cress), this protein is Trans-cinnamate 4-monooxygenase.